A 305-amino-acid chain; its full sequence is Cbb3-type cytochrome c oxidase subunit CcoP2 (305 aa).

The next 2 helical transmembrane spans lie at phenylalanine 4–leucine 24 and tryptophan 57–proline 77. Cytochrome c domains follow at residues glutamine 130 to serine 209 and valine 219 to serine 300. Heme c is bound by residues cysteine 143, cysteine 146, histidine 147, methionine 186, cysteine 232, cysteine 235, histidine 236, and methionine 277.

As to quaternary structure, component of the cbb3-type cytochrome c oxidase at least composed of CcoN, CcoO, CcoQ and CcoP. The cofactor is heme c.

The protein localises to the cell inner membrane. It functions in the pathway energy metabolism; oxidative phosphorylation. C-type cytochrome. Part of the cbb3-type cytochrome c oxidase complex. CcoP subunit is required for transferring electrons from donor cytochrome c via its heme groups to CcoO subunit. From there, electrons are shuttled to the catalytic binuclear center of CcoN subunit where oxygen reduction takes place. The complex also functions as a proton pump. In Stutzerimonas stutzeri (Pseudomonas stutzeri), this protein is Cbb3-type cytochrome c oxidase subunit CcoP2.